The chain runs to 569 residues: Vacuolar protein sorting-associated protein 45 homolog (569 aa).

Belongs to the STXBP/unc-18/SEC1 family. Interacts with both SYP41 or SYP42 and VTI12, but in different domains of the trans-Golgi network. Does not interact on the pervacuolar compartment with VTI11, SYP21 or SYP22, or on the cis-Golgi with SYP31. Interacts at the trans-Golgi network (TGN) with the SYP41/SYP61/VTI12 SNARE complex. In terms of tissue distribution, highly expressed in roots, lower expression in leaves, stems and flowers.

It localises to the golgi apparatus. It is found in the trans-Golgi network membrane. The protein resides in the early endosome. In terms of biological role, involved in the protein transport to the vacuole, probably at the level of vesicle fusion at the trans-Golgi network (TGN) and not in transport from the TGN to the prevacuolar compartment, by promoting the recycling of vacuolar sorting receptors back to the TGN. Involved in early endosomal vesicle trafficking, particularly at the trans-Golgi-network/early endosome (TGN/EE) thus residing in early endocytic route. Together with BIG5/BEN1 required for polar PIN-FORMED (PIN) proteins localization, for their dynamic repolarization, and consequently for auxin activity gradient formation and auxin-related developmental processes (e.g. embryonic patterning, organogenesis and vasculature venation patterning). Necessary for pollen germination and for cell expansion. Binds syntaxins. This Arabidopsis thaliana (Mouse-ear cress) protein is Vacuolar protein sorting-associated protein 45 homolog.